The following is a 222-amino-acid chain: uncharacterized protein (222 aa).

It belongs to the ycf73 family.

Its subcellular location is the plastid. It is found in the chloroplast. This is an uncharacterized protein from Oryza nivara (Indian wild rice).